Consider the following 146-residue polypeptide: Large ribosomal subunit protein uL11 (146 aa).

It belongs to the universal ribosomal protein uL11 family. Part of the ribosomal stalk of the 50S ribosomal subunit. Interacts with L10 and the large rRNA to form the base of the stalk. L10 forms an elongated spine to which L12 dimers bind in a sequential fashion forming a multimeric L10(L12)X complex. In terms of processing, one or more lysine residues are methylated.

Forms part of the ribosomal stalk which helps the ribosome interact with GTP-bound translation factors. This is Large ribosomal subunit protein uL11 from Corynebacterium kroppenstedtii (strain DSM 44385 / JCM 11950 / CIP 105744 / CCUG 35717).